We begin with the raw amino-acid sequence, 145 residues long: MLTVLQRVKEARVDIDGQTVGKINHGLLILCGFEPKDSLENIKRMLDKCINYRIFEDPSGKMNLSLKDVNGGLLLVPQFTLMADTQKGLRPSFSNAASPELGRELFDNLLTLAQKCHQNTQSGCFGANMQVYLCNDGPVTFLLQF.

Residues 137 to 138 (GP) carry the Gly-cisPro motif, important for rejection of L-amino acids motif.

It belongs to the DTD family. Homodimer.

The protein localises to the cytoplasm. It catalyses the reaction glycyl-tRNA(Ala) + H2O = tRNA(Ala) + glycine + H(+). It carries out the reaction a D-aminoacyl-tRNA + H2O = a tRNA + a D-alpha-amino acid + H(+). An aminoacyl-tRNA editing enzyme that deacylates mischarged D-aminoacyl-tRNAs. Also deacylates mischarged glycyl-tRNA(Ala), protecting cells against glycine mischarging by AlaRS. Acts via tRNA-based rather than protein-based catalysis; rejects L-amino acids rather than detecting D-amino acids in the active site. By recycling D-aminoacyl-tRNA to D-amino acids and free tRNA molecules, this enzyme counteracts the toxicity associated with the formation of D-aminoacyl-tRNA entities in vivo and helps enforce protein L-homochirality. This chain is D-aminoacyl-tRNA deacylase, found in Legionella pneumophila (strain Paris).